Consider the following 567-residue polypeptide: MSTSVFNRRWAALLLEALTRHGVRHICIAPGSRSTPLTLAAAANPSLVCHTHFDERGLGHLALGLAKASTEPVAVIVTSGTAVANLYPALIEAGLTGERLILLTADRPPELIDCGANQAIRQQGLFASHPTLSVNLPRPTPDISARWLVSTLDSAMAQLQHGALHINCPFAEPLYGGDEQQYADWSASLGDWWQDCHPWLRQTCYPPSLYQPPAQQADWFFWRQKRGVVIAGRMGAQEGRQLTAWAAMLGWPLIGDVLSQTGQPLPCADLWLAHPRAQETLAQAQMVLQFGSSLTSKRLLQWQTACQPQEYWLVDSAPGRLDPANHRGRRIICPVGEWLSRHPAQRRTPWATELAAYSESAQAQVIETLAGQFSEAAVAHQLAELLPDNGQLFVGNSLIVRLIDALGQLPAGYPVYSNRGASGIDGLLSTAAGVQRATAKPTLAIVGDLSALYDLNALALLRQSSAPMVLLVINNNGGQIFSLLPTPEAERQRFYCMPQDVNFEHAAVMFSLGYARPNSWPQLRELAHQCWLRGGTTLIEVQVPPSQGAETLQQLVQQVTLIPQVAP.

This sequence belongs to the TPP enzyme family. MenD subfamily. In terms of assembly, homodimer. Mg(2+) is required as a cofactor. The cofactor is Mn(2+). It depends on thiamine diphosphate as a cofactor.

The catalysed reaction is isochorismate + 2-oxoglutarate + H(+) = 5-enolpyruvoyl-6-hydroxy-2-succinyl-cyclohex-3-ene-1-carboxylate + CO2. The protein operates within quinol/quinone metabolism; 1,4-dihydroxy-2-naphthoate biosynthesis; 1,4-dihydroxy-2-naphthoate from chorismate: step 2/7. It functions in the pathway quinol/quinone metabolism; menaquinone biosynthesis. Catalyzes the thiamine diphosphate-dependent decarboxylation of 2-oxoglutarate and the subsequent addition of the resulting succinic semialdehyde-thiamine pyrophosphate anion to isochorismate to yield 2-succinyl-5-enolpyruvyl-6-hydroxy-3-cyclohexene-1-carboxylate (SEPHCHC). The chain is 2-succinyl-5-enolpyruvyl-6-hydroxy-3-cyclohexene-1-carboxylate synthase from Yersinia pestis bv. Antiqua (strain Antiqua).